We begin with the raw amino-acid sequence, 331 residues long: Type 2 lactosamine alpha-2,3-sialyltransferase (331 aa).

The Cytoplasmic segment spans residues 1–4 (MRGY). The helical; Signal-anchor for type II membrane protein transmembrane segment at 5–25 (LVAIFLSAVFLYYVLHCILWG) threads the bilayer. At 26 to 331 (TNVYWAAPVE…KNLVINLTQD (306 aa)) the chain is on the lumenal side. N-linked (GlcNAc...) asparagine glycosylation is found at Asn-129, Asn-181, Asn-282, Asn-295, Asn-308, and Asn-327.

Belongs to the glycosyltransferase 29 family.

It is found in the golgi apparatus membrane. It carries out the reaction a neolactoside nLc4Cer(d18:1(4E)) + CMP-N-acetyl-beta-neuraminate = a neolactoside IV(3)-alpha-NeuAc-nLc4Cer(d18:1(4E)) + CMP + H(+). The enzyme catalyses a beta-D-galactosyl-(1-&gt;4)-N-acetyl-beta-D-glucosaminyl derivative + CMP-N-acetyl-beta-neuraminate = an N-acetyl-alpha-neuraminyl-(2-&gt;3)-beta-D-galactosyl-(1-&gt;4)-N-acetyl-beta-D-glucosaminyl derivative + CMP + H(+). It catalyses the reaction a neolactoside nLc6Cer(d18:1(4E)) + CMP-N-acetyl-beta-neuraminate = a neolactoside VI(3)-alpha-NeuNAc-nLc6Cer(d18:1(4E)) + CMP + H(+). Transfers the sialyl residue from CMP-N-acetyl-beta-neuraminate to the terminal galactose residue on sugar chains of glycoproteins and glycolipids. It's alpha-2,3-sialyltransferase activity is specific toward type II glycan chains (Galbeta1-4GlcNAc) on glycoproteins and glycolipids such as neolactosides nLc4Cer and nLc6Cer, whose sialyl-products serve as precursors for the Lewis X antigen. Critically involved in the synthesis of functional selectin ligands needed for neutrophil recruitment during inflammation and lymphocyte homing to the lymph nodes. The chain is Type 2 lactosamine alpha-2,3-sialyltransferase (ST3GAL6) from Pongo abelii (Sumatran orangutan).